The following is a 336-amino-acid chain: Biotin synthase (336 aa).

The Radical SAM core domain maps to 36 to 263; sequence TKVQISTLLS…ESHVRLAAGR (228 aa). Residues Cys51, Cys55, and Cys58 each coordinate [4Fe-4S] cluster. Residues Cys95, Cys126, Cys186, and Arg258 each contribute to the [2Fe-2S] cluster site.

This sequence belongs to the radical SAM superfamily. Biotin synthase family. As to quaternary structure, homodimer. [4Fe-4S] cluster is required as a cofactor. Requires [2Fe-2S] cluster as cofactor.

It carries out the reaction (4R,5S)-dethiobiotin + (sulfur carrier)-SH + 2 reduced [2Fe-2S]-[ferredoxin] + 2 S-adenosyl-L-methionine = (sulfur carrier)-H + biotin + 2 5'-deoxyadenosine + 2 L-methionine + 2 oxidized [2Fe-2S]-[ferredoxin]. It functions in the pathway cofactor biosynthesis; biotin biosynthesis; biotin from 7,8-diaminononanoate: step 2/2. Functionally, catalyzes the conversion of dethiobiotin (DTB) to biotin by the insertion of a sulfur atom into dethiobiotin via a radical-based mechanism. The chain is Biotin synthase from Gluconobacter oxydans (strain 621H) (Gluconobacter suboxydans).